Consider the following 247-residue polypeptide: Flavin-dependent thymidylate synthase (247 aa).

The region spanning 1 to 237 (MDVKLLEATD…PKTFEYYEQE (237 aa)) is the ThyX domain. DUMP-binding positions include 85-88 (QITR), 98-100 (SMR), and Arg176. 88–90 (RHR) serves as a coordination point for FAD. A ThyX motif motif is present at residues 88-98 (RHRHVSFDVQS). FAD contacts are provided by residues 192 to 194 (NAR) and His198. A dUMP-binding site is contributed by Arg203. The active-site Involved in ionization of N3 of dUMP, leading to its activation is the Arg203.

This sequence belongs to the thymidylate synthase ThyX family. As to quaternary structure, homotetramer. It depends on FAD as a cofactor.

It carries out the reaction dUMP + (6R)-5,10-methylene-5,6,7,8-tetrahydrofolate + NADPH + H(+) = dTMP + (6S)-5,6,7,8-tetrahydrofolate + NADP(+). Its pathway is pyrimidine metabolism; dTTP biosynthesis. Catalyzes the reductive methylation of 2'-deoxyuridine-5'-monophosphate (dUMP) to 2'-deoxythymidine-5'-monophosphate (dTMP) while utilizing 5,10-methylenetetrahydrofolate (mTHF) as the methyl donor, and NADPH and FADH(2) as the reductant. The protein is Flavin-dependent thymidylate synthase of Haloarcula marismortui (strain ATCC 43049 / DSM 3752 / JCM 8966 / VKM B-1809) (Halobacterium marismortui).